The primary structure comprises 274 residues: Large ribosomal subunit protein uL2cz/uL2cy (274 aa).

Positions 224-253 (NPIDHPHGGGEGRAPIGRKKPTTPWGYPAL) are disordered.

This sequence belongs to the universal ribosomal protein uL2 family. In terms of assembly, part of the 50S ribosomal subunit.

Its subcellular location is the plastid. This chain is Large ribosomal subunit protein uL2cz/uL2cy (rpl2-A), found in Epifagus virginiana (Beechdrops).